The following is a 238-amino-acid chain: tRNA1(Val) (adenine(37)-N6)-methyltransferase (238 aa).

It belongs to the methyltransferase superfamily. tRNA (adenine-N(6)-)-methyltransferase family.

The protein resides in the cytoplasm. The enzyme catalyses adenosine(37) in tRNA1(Val) + S-adenosyl-L-methionine = N(6)-methyladenosine(37) in tRNA1(Val) + S-adenosyl-L-homocysteine + H(+). Specifically methylates the adenine in position 37 of tRNA(1)(Val) (anticodon cmo5UAC). The polypeptide is tRNA1(Val) (adenine(37)-N6)-methyltransferase (Shewanella putrefaciens (strain CN-32 / ATCC BAA-453)).